The chain runs to 253 residues: Ice-binding protein (253 aa).

A signal peptide spans 1-27 (MKTLISNSKKVLIPLIMGSIFAGNVMA). Cys75 and Cys93 are oxidised to a cystine. 2 short sequence motifs (ice-binding site motif (T-A/G-X-T/N)) span residues 220–223 (TGTT) and 232–235 (TAVT).

Belongs to the ice-binding protein family.

It is found in the secreted. Its function is as follows. Binds to the surface of ice crystals and inhibits their growth. Has ice recrystallization inhibition (RI) activity (the ability to prevent the formation of larger grains of ice at the expense of smaller grains), which may protect membranes from freezing injury. Has high thermal hysteresis (TH) activity, which is the ability to lower the freezing point of an aqueous solution below its melting point, and thus the freezing of the cell fluid can be prevented protecting the organism from ice damage. The TH activity of this protein is 3.8 degrees Celsius at 14 mM. The sequence is that of Ice-binding protein from Colwellia sp.